A 361-amino-acid chain; its full sequence is Molybdenum import ATP-binding protein ModC (361 aa).

The ABC transporter domain maps to 1–235 (MDGLRLRFRR…VDLPLALDDD (235 aa)). Residue 33-40 (GHSGSGKS) participates in ATP binding. The Mop domain maps to 296–361 (QSSILNRLPV…AQIKSVAVLA (66 aa)).

The protein belongs to the ABC transporter superfamily. Molybdate importer (TC 3.A.1.8) family. The complex is composed of two ATP-binding proteins (ModC), two transmembrane proteins (ModB) and a solute-binding protein (ModA).

The protein resides in the cell inner membrane. It carries out the reaction molybdate(out) + ATP + H2O = molybdate(in) + ADP + phosphate + H(+). Functionally, part of the ABC transporter complex ModABC involved in molybdenum import. Responsible for energy coupling to the transport system. This chain is Molybdenum import ATP-binding protein ModC, found in Pseudomonas aeruginosa (strain ATCC 15692 / DSM 22644 / CIP 104116 / JCM 14847 / LMG 12228 / 1C / PRS 101 / PAO1).